Reading from the N-terminus, the 666-residue chain is tRNA 5-methylaminomethyl-2-thiouridine biosynthesis bifunctional protein MnmC (666 aa).

Positions 1–253 are tRNA (mnm(5)s(2)U34)-methyltransferase; that stretch reads MSSPFVPIIT…KRHMICAHYE (253 aa). The FAD-dependent cmnm(5)s(2)U34 oxidoreductase stretch occupies residues 283–666; that stretch reads VGGGLAGCFI…FLRKKIIQGP (384 aa).

This sequence in the N-terminal section; belongs to the methyltransferase superfamily. tRNA (mnm(5)s(2)U34)-methyltransferase family. In the C-terminal section; belongs to the DAO family. The cofactor is FAD.

It is found in the cytoplasm. It catalyses the reaction 5-aminomethyl-2-thiouridine(34) in tRNA + S-adenosyl-L-methionine = 5-methylaminomethyl-2-thiouridine(34) in tRNA + S-adenosyl-L-homocysteine + H(+). Functionally, catalyzes the last two steps in the biosynthesis of 5-methylaminomethyl-2-thiouridine (mnm(5)s(2)U) at the wobble position (U34) in tRNA. Catalyzes the FAD-dependent demodification of cmnm(5)s(2)U34 to nm(5)s(2)U34, followed by the transfer of a methyl group from S-adenosyl-L-methionine to nm(5)s(2)U34, to form mnm(5)s(2)U34. The sequence is that of tRNA 5-methylaminomethyl-2-thiouridine biosynthesis bifunctional protein MnmC from Legionella pneumophila (strain Lens).